We begin with the raw amino-acid sequence, 121 residues long: MIQVESRLTVCDNSGAKEALCIRVLGGTGRRYASVGDVIVVSVKSVIPSSDVKKGAVSKALIVRTKKEIRRPDGSYIRFDDNACVLLNNAGEIRGSRIFGPVARELRATNMKVVSLAPEVL.

The protein belongs to the universal ribosomal protein uL14 family. As to quaternary structure, part of the 50S ribosomal subunit. Forms a cluster with proteins L3 and L19. In the 70S ribosome, L14 and L19 interact and together make contacts with the 16S rRNA in bridges B5 and B8.

Its function is as follows. Binds to 23S rRNA. Forms part of two intersubunit bridges in the 70S ribosome. The chain is Large ribosomal subunit protein uL14 from Bacteroides fragilis (strain ATCC 25285 / DSM 2151 / CCUG 4856 / JCM 11019 / LMG 10263 / NCTC 9343 / Onslow / VPI 2553 / EN-2).